The following is a 418-amino-acid chain: Serine hydroxymethyltransferase (418 aa).

(6S)-5,6,7,8-tetrahydrofolate-binding positions include Leu-118 and 122-124; that span reads GHL. Residue Lys-227 is modified to N6-(pyridoxal phosphate)lysine. Glu-242 contacts (6S)-5,6,7,8-tetrahydrofolate.

The protein belongs to the SHMT family. As to quaternary structure, homodimer. Pyridoxal 5'-phosphate serves as cofactor.

The protein resides in the cytoplasm. It catalyses the reaction (6R)-5,10-methylene-5,6,7,8-tetrahydrofolate + glycine + H2O = (6S)-5,6,7,8-tetrahydrofolate + L-serine. It participates in one-carbon metabolism; tetrahydrofolate interconversion. Its pathway is amino-acid biosynthesis; glycine biosynthesis; glycine from L-serine: step 1/1. Functionally, catalyzes the reversible interconversion of serine and glycine with tetrahydrofolate (THF) serving as the one-carbon carrier. This reaction serves as the major source of one-carbon groups required for the biosynthesis of purines, thymidylate, methionine, and other important biomolecules. Also exhibits THF-independent aldolase activity toward beta-hydroxyamino acids, producing glycine and aldehydes, via a retro-aldol mechanism. The protein is Serine hydroxymethyltransferase of Chloroflexus aggregans (strain MD-66 / DSM 9485).